Here is a 315-residue protein sequence, read N- to C-terminus: MQKKEIIILCGPTASGKSYLGHALAKACDGEIINIDSMQVYKEIPIITASPPESYKSEIPYHLYNFLPITEDFSVVKYLKLAAEKINQVTASGKLPILIGGTGLYINSLVFGYNNIPDISEDLRQQVRKLHNEIGNTELHNRLTKLDPLASSKINQSDTQRLIRAYEVVLQTGKSIFSFQTLPKEQILSEFNFKIIFLNPERKFLYKICDERLANIFKDGAIDEIALIKKQFNPDYLNLKAVGIKEILAYLENKLTLSEALNLAQTRTRRYAKRQITWFKHQIKEKITLDYSNEEDFLQVTRKLSILIDLPNSNK.

11–18 (GPTASGKS) serves as a coordination point for ATP. 13-18 (TASGKS) contacts substrate. Interaction with substrate tRNA stretches follow at residues 36–39 (DSMQ) and 160–164 (QRLIR).

The protein belongs to the IPP transferase family. As to quaternary structure, monomer. Mg(2+) serves as cofactor.

The catalysed reaction is adenosine(37) in tRNA + dimethylallyl diphosphate = N(6)-dimethylallyladenosine(37) in tRNA + diphosphate. Functionally, catalyzes the transfer of a dimethylallyl group onto the adenine at position 37 in tRNAs that read codons beginning with uridine, leading to the formation of N6-(dimethylallyl)adenosine (i(6)A). This Rickettsia bellii (strain OSU 85-389) protein is tRNA dimethylallyltransferase.